Reading from the N-terminus, the 235-residue chain is Phosphoribosylaminoimidazole-succinocarboxamide synthase (235 aa).

It belongs to the SAICAR synthetase family.

It catalyses the reaction 5-amino-1-(5-phospho-D-ribosyl)imidazole-4-carboxylate + L-aspartate + ATP = (2S)-2-[5-amino-1-(5-phospho-beta-D-ribosyl)imidazole-4-carboxamido]succinate + ADP + phosphate + 2 H(+). Its pathway is purine metabolism; IMP biosynthesis via de novo pathway; 5-amino-1-(5-phospho-D-ribosyl)imidazole-4-carboxamide from 5-amino-1-(5-phospho-D-ribosyl)imidazole-4-carboxylate: step 1/2. The protein is Phosphoribosylaminoimidazole-succinocarboxamide synthase of Streptococcus agalactiae serotype Ia (strain ATCC 27591 / A909 / CDC SS700).